A 335-amino-acid chain; its full sequence is Thioredoxin reductase (335 aa).

FAD-binding positions include 22 to 25 (SGPA), 44 to 51 (EGTSFGGA), asparagine 60, and valine 93. A disulfide bridge connects residues cysteine 145 and cysteine 148. Serine 166, histidine 185, arginine 191, isoleucine 248, and tyrosine 268 together coordinate NADP(+). Residues aspartate 288 and 295–298 (RQAV) each bind FAD. Arginine 295 contacts NADP(+).

It belongs to the class-II pyridine nucleotide-disulfide oxidoreductase family. As to quaternary structure, homodimer. It depends on FAD as a cofactor.

The protein resides in the cytoplasm. The enzyme catalyses [thioredoxin]-dithiol + NADP(+) = [thioredoxin]-disulfide + NADPH + H(+). This is Thioredoxin reductase from Mycobacterium tuberculosis (strain CDC 1551 / Oshkosh).